The chain runs to 163 residues: Crossover junction endodeoxyribonuclease RuvC (163 aa).

Residues aspartate 8, glutamate 68, and aspartate 140 contribute to the active site. Mg(2+) is bound by residues aspartate 8, glutamate 68, and aspartate 140.

Belongs to the RuvC family. As to quaternary structure, homodimer which binds Holliday junction (HJ) DNA. The HJ becomes 2-fold symmetrical on binding to RuvC with unstacked arms; it has a different conformation from HJ DNA in complex with RuvA. In the full resolvosome a probable DNA-RuvA(4)-RuvB(12)-RuvC(2) complex forms which resolves the HJ. Requires Mg(2+) as cofactor.

The protein localises to the cytoplasm. The catalysed reaction is Endonucleolytic cleavage at a junction such as a reciprocal single-stranded crossover between two homologous DNA duplexes (Holliday junction).. The RuvA-RuvB-RuvC complex processes Holliday junction (HJ) DNA during genetic recombination and DNA repair. Endonuclease that resolves HJ intermediates. Cleaves cruciform DNA by making single-stranded nicks across the HJ at symmetrical positions within the homologous arms, yielding a 5'-phosphate and a 3'-hydroxyl group; requires a central core of homology in the junction. The consensus cleavage sequence is 5'-(A/T)TT(C/G)-3'. Cleavage occurs on the 3'-side of the TT dinucleotide at the point of strand exchange. HJ branch migration catalyzed by RuvA-RuvB allows RuvC to scan DNA until it finds its consensus sequence, where it cleaves and resolves the cruciform DNA. The chain is Crossover junction endodeoxyribonuclease RuvC from Erythrobacter litoralis (strain HTCC2594).